Consider the following 366-residue polypeptide: Mitogen-activated protein kinase sakA (366 aa).

The Protein kinase domain maps to Y20–L299. Residues V26 to V34 and K49 each bind ATP. D141 serves as the catalytic Proton acceptor. T171 bears the Phosphothreonine mark. The short motif at T171–Y173 is the TXY element. The residue at position 173 (Y173) is a Phosphotyrosine.

It belongs to the protein kinase superfamily. Ser/Thr protein kinase family. MAP kinase subfamily. HOG1 sub-subfamily. As to quaternary structure, interacts with the AGC kinase ypkA. Interacts with sakA upon osmotic and cell wall stresses. The cofactor is Mg(2+). Post-translationally, dually phosphorylated on Thr-171 and Tyr-173, which activates the enzyme. Environmental stresses such as high temperature, osmotic stress, cold stress or ethanol stress modulate the activation of sakA via phosphorylation.

It is found in the cytoplasm. The protein localises to the nucleus. The catalysed reaction is L-seryl-[protein] + ATP = O-phospho-L-seryl-[protein] + ADP + H(+). It carries out the reaction L-threonyl-[protein] + ATP = O-phospho-L-threonyl-[protein] + ADP + H(+). Activated by tyrosine and threonine phosphorylation. Deactivated by protein phosphatase 2C homolog 2 ptcB. In terms of biological role, proline-directed serine/threonine-protein kinase involved in a signal transduction pathway that is activated by changes in the osmolarity of the extracellular environment. Controls osmotic regulation of transcription of target genes. Involved in environmental stress response. With mpkC, plays a redundant or cooperative role in the conidial stress resistance. Also plays a supportive role in osmotic stress adaptation when sakA is deficient. Involved in paradoxical growth, the cell wall integrity (CWI) pathway and biofilm formation. Also collaborates with mpkC to allow ful virulence in a neutropenic murine model ofinvasive pulmonary aspergillosis. MpkC and sakA have both independent and collaborative functions during the transcriptional response to transient osmotic stress and sakA not only seems to modulate pathways involved in nucleotide, fatty acid, nitrogen and organic acid biosynthesis but is also important for the activation of genes involved in mitochondrial and endoplasmic reticulum functions. The chain is Mitogen-activated protein kinase sakA from Aspergillus fumigatus (strain ATCC MYA-4609 / CBS 101355 / FGSC A1100 / Af293) (Neosartorya fumigata).